Consider the following 215-residue polypeptide: uncharacterized protein (215 aa).

Residues S114, D162, and H194 each act as charge relay system in the active site.

This sequence belongs to the AB hydrolase superfamily. AB hydrolase 2 family.

This is an uncharacterized protein from Rickettsia typhi (strain ATCC VR-144 / Wilmington).